Consider the following 462-residue polypeptide: Argininosuccinate lyase (462 aa).

Belongs to the lyase 1 family. Argininosuccinate lyase subfamily.

The protein resides in the cytoplasm. The catalysed reaction is 2-(N(omega)-L-arginino)succinate = fumarate + L-arginine. It functions in the pathway amino-acid biosynthesis; L-arginine biosynthesis; L-arginine from L-ornithine and carbamoyl phosphate: step 3/3. This is Argininosuccinate lyase from Bacillus anthracis (strain A0248).